The chain runs to 864 residues: Leucine--tRNA ligase (864 aa).

A 'HIGH' region motif is present at residues 57–67 (PYPSGNLHMGH). The short motif at 628 to 632 (KMSKS) is the 'KMSKS' region element. Residue Lys631 participates in ATP binding.

It belongs to the class-I aminoacyl-tRNA synthetase family.

The protein resides in the cytoplasm. It catalyses the reaction tRNA(Leu) + L-leucine + ATP = L-leucyl-tRNA(Leu) + AMP + diphosphate. This chain is Leucine--tRNA ligase, found in Prochlorococcus marinus (strain MIT 9515).